The chain runs to 138 residues: Basic phospholipase A2 homolog ammodytin L (138 aa).

The first 16 residues, 1–16 (MRILWIVAVCLIGVEG), serve as a signal peptide directing secretion. Disulfide bonds link Cys42-Cys131, Cys44-Cys60, Cys59-Cys111, Cys65-Cys138, Cys66-Cys104, Cys73-Cys97, and Cys91-Cys102. The interval 121–133 (KKYKVYLRFKCKG) is important for membrane-damaging activities in eukaryotes and bacteria; heparin-binding.

Belongs to the phospholipase A2 family. Group II subfamily. S49 sub-subfamily. Expressed by the venom gland.

It localises to the secreted. In terms of biological role, snake venom phospholipase A2 homolog that lacks enzymatic activity. Is very active in inducing myonecrosis in vivo and shows a potent calcium-independent membrane-damaging activity in vitro, most probably by binding and incorporating in the membrane. Also acts as a presynaptic neurotoxin. A model of myotoxic mechanism has been proposed: an apo Lys49-PLA2 is activated by the entrance of a hydrophobic molecule (e.g. fatty acid) at the hydrophobic channel of the protein leading to a reorientation of a monomer. This reorientation causes a transition between 'inactive' to 'active' states, causing alignment of C-terminal and membrane-docking sites (MDoS) side-by-side and putting the membrane-disruption sites (MDiS) in the same plane, exposed to solvent and in a symmetric position for both monomers. The MDoS region stabilizes the toxin on membrane by the interaction of charged residues with phospholipid head groups. Subsequently, the MDiS region destabilizes the membrane with penetration of hydrophobic residues. This insertion causes a disorganization of the membrane, allowing an uncontrolled influx of ions (i.e. calcium and sodium), and eventually triggering irreversible intracellular alterations and cell death. This Vipera ammodytes ammodytes (Western sand viper) protein is Basic phospholipase A2 homolog ammodytin L.